Reading from the N-terminus, the 135-residue chain is ATP synthase epsilon chain (135 aa).

It belongs to the ATPase epsilon chain family. As to quaternary structure, F-type ATPases have 2 components, CF(1) - the catalytic core - and CF(0) - the membrane proton channel. CF(1) has five subunits: alpha(3), beta(3), gamma(1), delta(1), epsilon(1). CF(0) has three main subunits: a, b and c.

Its subcellular location is the cell inner membrane. Its function is as follows. Produces ATP from ADP in the presence of a proton gradient across the membrane. This is ATP synthase epsilon chain from Granulibacter bethesdensis (strain ATCC BAA-1260 / CGDNIH1).